A 410-amino-acid chain; its full sequence is Na(+)-translocating NADH-quinone reductase subunit B (410 aa).

Helical transmembrane passes span 56 to 76 (MMIL…YNVG), 119 to 139 (LFGA…GGFW), and 159 to 179 (SILF…ALGI). FMN phosphoryl threonine is present on Thr-232. Helical transmembrane passes span 266–286 (GSIG…IVFA), 293–313 (IIAG…FIGS), 318–338 (MFAM…GMLF), 347–367 (SFTN…CVLI), and 377–397 (GMML…YFVA).

It belongs to the NqrB/RnfD family. As to quaternary structure, composed of six subunits; NqrA, NqrB, NqrC, NqrD, NqrE and NqrF. The cofactor is FMN.

Its subcellular location is the cell inner membrane. It catalyses the reaction a ubiquinone + n Na(+)(in) + NADH + H(+) = a ubiquinol + n Na(+)(out) + NAD(+). Its function is as follows. NQR complex catalyzes the reduction of ubiquinone-1 to ubiquinol by two successive reactions, coupled with the transport of Na(+) ions from the cytoplasm to the periplasm. NqrA to NqrE are probably involved in the second step, the conversion of ubisemiquinone to ubiquinol. The polypeptide is Na(+)-translocating NADH-quinone reductase subunit B (Neisseria meningitidis serogroup A / serotype 4A (strain DSM 15465 / Z2491)).